The sequence spans 481 residues: 3-isopropylmalate dehydratase large subunit (481 aa).

The [4Fe-4S] cluster site is built by C357, C417, and C420.

Belongs to the aconitase/IPM isomerase family. LeuC type 1 subfamily. In terms of assembly, heterodimer of LeuC and LeuD. [4Fe-4S] cluster serves as cofactor.

It catalyses the reaction (2R,3S)-3-isopropylmalate = (2S)-2-isopropylmalate. It participates in amino-acid biosynthesis; L-leucine biosynthesis; L-leucine from 3-methyl-2-oxobutanoate: step 2/4. Its function is as follows. Catalyzes the isomerization between 2-isopropylmalate and 3-isopropylmalate, via the formation of 2-isopropylmaleate. The chain is 3-isopropylmalate dehydratase large subunit from Maricaulis maris (strain MCS10) (Caulobacter maris).